Here is a 441-residue protein sequence, read N- to C-terminus: GTPase Der (441 aa).

2 consecutive EngA-type G domains span residues 4–169 and 178–353; these read PIVA…PEGS and PKVA…DAQT. GTP-binding positions include 10-17, 57-61, 120-123, 184-191, 231-235, and 296-299; these read GRPNVGKS, DTGGI, NKVD, GKPNVGKS, DTAGL, and NKWD. In terms of domain architecture, KH-like spans 354–438; that stretch reads MRIPTGVLNE…SIRFINRERK (85 aa).

It belongs to the TRAFAC class TrmE-Era-EngA-EngB-Septin-like GTPase superfamily. EngA (Der) GTPase family. As to quaternary structure, associates with the 50S ribosomal subunit.

In terms of biological role, GTPase that plays an essential role in the late steps of ribosome biogenesis. The polypeptide is GTPase Der (Lachnospira eligens (strain ATCC 27750 / DSM 3376 / VPI C15-48 / C15-B4) (Eubacterium eligens)).